A 1006-amino-acid chain; its full sequence is SAC3 family protein A (1006 aa).

Disordered regions lie at residues 1–75 (MNHG…GPAT), 106–162 (TPYQ…PGSY), 183–239 (GYQS…TIAT), 266–326 (GTEK…AVST), 516–550 (TVTT…RWEP), 595–638 (GFKP…SDKD), and 650–690 (AGSA…GNLH). Polar residues-rich tracts occupy residues 26 to 75 (GSQT…GPAT) and 106 to 115 (TPYQTSSDPH). The segment covering 116–140 (NYSNTGYSNYYSGYQQQPSQSYPQP) has biased composition (low complexity). Residues 144 to 162 (YQNTGAPQPLSSFQNPGSY) are compositionally biased toward polar residues. Polar residues-rich tracts occupy residues 269–282 (KLST…SQSF) and 313–326 (SHPP…AVST). Over residues 516–539 (TVTTTNVTNSESSSAQLSSLQNKS) the composition is skewed to low complexity. Over residues 609-618 (SFQRPVKRQR) the composition is skewed to basic residues. Residues 653–680 (AEEKKRRDSRSKRFEKIQGHSRGNDLTK) show a composition bias toward basic and acidic residues. The PCI domain maps to 804-978 (DLPEYNQCLS…DMLLDTKATS (175 aa)).

This sequence belongs to the SAC3 family. In terms of assembly, interacts with EER5, SAC3B and CML20.

It localises to the nucleus. In terms of biological role, component of the TREX-2 complex (transcription and export complex 2), a muliprotein complex that functions in docking export-competent ribonucleoprotein particles (mRNPs) to the nuclear entrance of the nuclear pore complex (nuclear basket). TREX-2 participates in mRNA export and accurate chromatin positioning in the nucleus by tethering genes to the nuclear periphery. The chain is SAC3 family protein A from Arabidopsis thaliana (Mouse-ear cress).